Reading from the N-terminus, the 1117-residue chain is Reverse gyrase (1117 aa).

The RG N-terminal-type zinc-finger motif lies at 3 to 42 (LATGAKYYHSCINCGGINTDTRNEKGLPCEVCLPFEDGDV). Positions 13, 16, 31, and 34 each coordinate Zn(2+). ATP-binding positions include Q84 and 101–108 (APTGVGKT). The Helicase ATP-binding domain maps to 88-284 (AKRLLLSKSF…LFRELLGFEI (197 aa)). Residues 206–209 (DDVD) carry the DEAD box motif. A topoisomerase I region spans residues 551 to 1117 (KDMKSRMIIV…EELNEILIKN (567 aa)). Residues 555 to 712 (SRMIIVESPT…NVQRIEMHEI (158 aa)) form the Toprim domain. E561 serves as a coordination point for Mg(2+). The segment at 631 to 658 (IKRCSSCGAQFTDELPRCPYCNSDKIDD) adopts an RG C-terminal-type zinc-finger fold. The Zn(2+) site is built by C634, C637, C648, and C651. D681 is a Mg(2+) binding site. Residues 728–1114 (DVNLVKSQIV…NLYEELNEIL (387 aa)) enclose the Topo IA-type catalytic domain. Y864 acts as the O-(5'-phospho-DNA)-tyrosine intermediate in catalysis.

The protein in the N-terminal section; belongs to the DEAD box helicase family. DDVD subfamily. This sequence in the C-terminal section; belongs to the type IA topoisomerase family. In terms of assembly, monomer. Zn(2+) is required as a cofactor. The cofactor is Mg(2+).

Its subcellular location is the cytoplasm. The enzyme catalyses ATP + H2O = ADP + phosphate + H(+). Its function is as follows. Modifies the topological state of DNA by introducing positive supercoils in an ATP-dependent process, increasing the linking number in steps of +1; also positively supercoils with dATP and ATP-gamma-S. With UTP or dTTP relaxes negatively supercoiled DNA, in the absence of any nucleotide partially relaxes negative supercoils. In the absence of nucleotide has a higher affinity for dsDNA with a single-stranded tail than dsDNA or ssDNA. Has an ATPase activity in the absence of DNA. Binds to single-stranded DNA, transiently cleaves and then rejoins the ends, introducing a positive supercoil in the process. The scissile phosphodiester is attacked by the catalytic tyrosine of the enzyme, resulting in the formation of a DNA-(5'-phosphotyrosyl)-enzyme intermediate. Probably involved in rewinding DNA strands in regions of the chromosome that have opened up to allow replication, transcription, DNA repair and/or for DNA protection. The sequence is that of Reverse gyrase from Caldanaerobacter subterraneus subsp. tengcongensis (strain DSM 15242 / JCM 11007 / NBRC 100824 / MB4) (Thermoanaerobacter tengcongensis).